Reading from the N-terminus, the 669-residue chain is Alpha-1,6-mannosylglycoprotein 6-beta-N-acetylglucosaminyltransferase (669 aa).

Topologically, residues 1-7 are cytoplasmic; it reads MRRRHRC. A helical; Signal-anchor for type II membrane protein membrane pass occupies residues 8 to 28; the sequence is VALLFIFSAFITPLGFFYYTI. At 29 to 669 the chain is on the lumenal side; it reads SNESKRYSEE…EQHAICKKCL (641 aa). N-linked (GlcNAc...) asparagine glycans are attached at residues N30, N412, N437, and N626.

It belongs to the glycosyltransferase 18 family. As to expression, expressed in a complex subset of neurons in larvae and in the spermathecal and pharyngeal-intestinal valves and certain vulval cells of adults.

The protein resides in the golgi apparatus membrane. The enzyme catalyses N(4)-{beta-D-GlcNAc-(1-&gt;2)-[beta-D-GlcNAc-(1-&gt;4)]-alpha-D-Man-(1-&gt;3)-[beta-D-GlcNAc-(1-&gt;2)-alpha-D-Man-(1-&gt;6)]-beta-D-Man-(1-&gt;4)-beta-D-GlcNAc-(1-&gt;4)-beta-D-GlcNAc}-L-asparaginyl-[protein] + UDP-N-acetyl-alpha-D-glucosamine = N(4)-{beta-D-GlcNAc-(1-&gt;2)-[beta-D-GlcNAc-(1-&gt;4)]-alpha-D-Man-(1-&gt;3)-[beta-D-GlcNAc-(1-&gt;2)-[beta-D-GlcNAc-(1-&gt;6)]-alpha-D-Man-(1-&gt;6)]-beta-D-Man-(1-&gt;4)-beta-D-GlcNAc-(1-&gt;4)-beta-D-GlcNAc}-L-asparaginyl-[protein] + UDP + H(+). The protein operates within protein modification; protein glycosylation. In terms of biological role, catalyzes the addition of N-acetylglucosamine (GlcNAc) in beta 1-6 linkage to the alpha-linked mannose of biantennary N-linked oligosaccharides. This chain is Alpha-1,6-mannosylglycoprotein 6-beta-N-acetylglucosaminyltransferase (gly-2), found in Caenorhabditis elegans.